The chain runs to 528 residues: MLAKISSSAKRFVHRSLVVRGNAATFPLSFSFCRRRAFSGKTSYDYREVLRTGLSDIELDDAIGLFGVMAQSRPFPSIIEFSKLLSAIAKMNKFDLVISFGEKMEILGISHNLYTYNILINCFCRCSRLSLALALLGKMMKLGYEPDIVTLNSLLNGFCHGNRISDAVALVDQMVEMGYKPDTVTFTTLIHGLFLHNKASEAVALIDRMVQRGCQPDLVTYGAVVNGLCKRGDTDLALNLLNKMEAAKIEANVVIYSTVIDSLCKYRHEDDALNLFTEMENKGVRPNVITYSSLISCLCNYGRWSDASRLLSDMIERKINPNLVTFSALIDAFVKKGKLVKAEKLYEEMIKRSIDPNIFTYSSLINGFCMLDRLGEAKQMLELMIRKDCLPNVVTYNTLINGFCKAKRVDKGMELFREMSQRGLVGNTVTYTTLIHGFFQARDCDNAQMVFKQMVSVGVHPNILTYNILLDGLCKNGKLAKAMVVFEYLQRSTMEPDIYTYNIMIEGMCKAGKWKMGGIYFVASALKE.

Residues 1–20 (MLAKISSSAKRFVHRSLVVR) constitute a mitochondrion transit peptide. 13 PPR repeats span residues 77-111 (SIIE…GISH), 112-146 (NLYT…GYEP), 147-181 (DIVT…GYKP), 182-216 (DTVT…GCQP), 217-251 (DLVT…KIEA), 252-286 (NVVI…GVRP), 287-321 (NVIT…KINP), 322-356 (NLVT…SIDP), 357-391 (NIFT…DCLP), 392-426 (NVVT…GLVG), 427-461 (NTVT…GVHP), 462-496 (NILT…TMEP), and 497-528 (DIYT…ALKE).

Belongs to the PPR family. P subfamily.

Its subcellular location is the mitochondrion. In Arabidopsis thaliana (Mouse-ear cress), this protein is Pentatricopeptide repeat-containing protein At1g62914, mitochondrial.